Here is a 1939-residue protein sequence, read N- to C-terminus: Myosin-6 (1939 aa).

Positions 32-81 (DIRTECFVPDDKEEFVKAKILSREGGKVIAETENGKTVTVKEDQVLQQNP) constitute a Myosin N-terminal SH3-like domain. Residues 85–780 (DKIEDMAMLT…LLGLLEEMRD (696 aa)) enclose the Myosin motor domain. An N6,N6,N6-trimethyllysine modification is found at Lys129. An ATP-binding site is contributed by 178 to 185 (GESGAGKT). A Phosphothreonine modification is found at Thr379. Ser417 is modified (phosphoserine). Actin-binding regions lie at residues 657 to 679 (LNKL…IPNE) and 759 to 773 (KFGH…GLLG). The 30-residue stretch at 783–812 (LSRIITRMQAQARGQLMRIEFKKIVERRDA) folds into the IQ domain. Residues 842-1939 (LKSAETEKEM…GAKQKMHDEE (1098 aa)) adopt a coiled-coil conformation. At Ser1139 the chain carries Phosphoserine. Tyr1261 carries the post-translational modification Phosphotyrosine. Ser1271 bears the Phosphoserine mark. Residues Thr1277 and Thr1284 each carry the phosphothreonine modification. A Phosphoserine modification is found at Ser1309. Tyr1310 carries the phosphotyrosine modification. Thr1311 carries the phosphothreonine modification. At Ser1512 the chain carries Phosphoserine. The residue at position 1515 (Thr1515) is a Phosphothreonine. Composition is skewed to basic and acidic residues over residues 1826-1837 (GELEAEQKRNAE) and 1925-1939 (KSRD…HDEE). 2 disordered regions span residues 1826–1849 (GELE…ERRI) and 1909–1939 (EERA…HDEE).

The protein belongs to the TRAFAC class myosin-kinesin ATPase superfamily. Myosin family. As to quaternary structure, muscle myosin is a hexameric protein that consists of 2 heavy chain subunits (MHC), 2 alkali light chain subunits (MLC) and 2 regulatory light chain subunits (MLC-2).

The protein resides in the cytoplasm. Its subcellular location is the myofibril. In terms of biological role, muscle contraction. In Homo sapiens (Human), this protein is Myosin-6 (MYH6).